We begin with the raw amino-acid sequence, 253 residues long: Blue-light photoreceptor (253 aa).

Positions 6 to 79 constitute a PAS domain; it reads KFDVILKALN…AKIRHAINEK (74 aa). C56 carries the S-4a-FMN cysteine modification. The PAC domain occupies 80 to 133; the sequence is STANVLLKNYRKNGTSFMNELTIEPIYDDNDHLYFVGIQKDVTTEHNYQLELEK. An STAS domain is found at 142-253; it reads STPIVPIKEN…STIKEALQFY (112 aa).

Post-translationally, FMN binds covalently to cysteine after exposure to blue light and this bond is spontaneously broken in the dark.

Exhibits the same spectroscopical features and blue-light induced photochemistry as plants phototropins, with the reversible formation of a blue-shifted photoproduct, assigned to an FMN-cysteine thiol adduct. Positive regulator in the activation of the general stress transcription factor sigma-B. The protein is Blue-light photoreceptor of Listeria innocua serovar 6a (strain ATCC BAA-680 / CLIP 11262).